Consider the following 406-residue polypeptide: Homocysteine-responsive endoplasmic reticulum-resident ubiquitin-like domain member 2 protein (406 aa).

The Ubiquitin-like domain maps to 10-89 (VTLIIKAPNQ…HMVHLVCTSR (80 aa)). The interval 86–156 (CTSRTPPSSP…PQAQTDPAQS (71 aa)) is disordered. Composition is skewed to low complexity over residues 87–98 (TSRTPPSSPKSS) and 109–139 (SNSNSSSDQSGSSTPSSSQETLTLATSSSSE). Residues 145-156 (TLPQAQTDPAQS) show a composition bias toward polar residues. The helical transmembrane segment at 302-322 (FIMVMGAMLLVYLHQAGWFPF) threads the bilayer.

The protein localises to the membrane. Its function is as follows. Could be involved in the unfolded protein response (UPR) pathway. This Bos taurus (Bovine) protein is Homocysteine-responsive endoplasmic reticulum-resident ubiquitin-like domain member 2 protein (HERPUD2).